Here is a 338-residue protein sequence, read N- to C-terminus: tRNA N6-adenosine threonylcarbamoyltransferase (338 aa).

Fe cation-binding residues include His-111 and His-115. Residues 134–138 (LVSGG), Asp-167, Gly-180, and Asn-272 contribute to the substrate site. Asp-300 serves as a coordination point for Fe cation.

It belongs to the KAE1 / TsaD family. It depends on Fe(2+) as a cofactor.

The protein resides in the cytoplasm. It catalyses the reaction L-threonylcarbamoyladenylate + adenosine(37) in tRNA = N(6)-L-threonylcarbamoyladenosine(37) in tRNA + AMP + H(+). Its function is as follows. Required for the formation of a threonylcarbamoyl group on adenosine at position 37 (t(6)A37) in tRNAs that read codons beginning with adenine. Is involved in the transfer of the threonylcarbamoyl moiety of threonylcarbamoyl-AMP (TC-AMP) to the N6 group of A37, together with TsaE and TsaB. TsaD likely plays a direct catalytic role in this reaction. The chain is tRNA N6-adenosine threonylcarbamoyltransferase from Nitrosomonas eutropha (strain DSM 101675 / C91 / Nm57).